The sequence spans 161 residues: Efficient mitochondria targeting-associated protein 19 (161 aa).

The Cytoplasmic segment spans residues 1–10 (MKLGHREQQF). An EXPERA domain is found at 7 to 159 (EQQFYLWYFI…PTFLIPLRLC (153 aa)). A helical transmembrane segment spans residues 11–31 (YLWYFIVHIPITIFIDSSVVI). Residues 32-61 (PAKWQLGIAQKVVSDHIAKQHDFLLSEKPE) lie on the Lumenal side of the membrane. A helical transmembrane segment spans residues 62 to 82 (WLYWFVVLELVLQLPLFVYFV). Residues 83-101 (NKFWNSSELQVNTNSRLKK) are Cytoplasmic-facing. A helical membrane pass occupies residues 102–122 (WLRIYGWNASLTTLICIVVIF). Topologically, residues 123–141 (KRGYIPYDVLKTSLSMTQK) are lumenal. The chain crosses the membrane as a helical span at residues 142–160 (CQLASVYLPTFLIPLRLCF). Val161 is a topological domain (cytoplasmic).

This sequence belongs to the TMEM97/sigma-2 receptor family.

It is found in the endoplasmic reticulum membrane. Its function is as follows. Part of an import route for newly synthesized mitochondrial proteins termed the ER-SURF pathway (ER surface-mediated protein targeting), which retrieves mitochondrial precursor proteins from the ER surface and reroutes them to mitochondria for efficient mitochondrial import. Acts as a quality control factor in the ER, promoting the proteolytic degradation of nonproductive and extramitochondrial precursor proteins in the ER membrane thus removing them from the ER surface. This is Efficient mitochondria targeting-associated protein 19 from Saccharomyces cerevisiae (strain ATCC 204508 / S288c) (Baker's yeast).